A 228-amino-acid polypeptide reads, in one-letter code: Probable septum site-determining protein MinC (228 aa).

It belongs to the MinC family. As to quaternary structure, interacts with MinD and FtsZ.

Functionally, cell division inhibitor that blocks the formation of polar Z ring septums. Rapidly oscillates between the poles of the cell to destabilize FtsZ filaments that have formed before they mature into polar Z rings. Prevents FtsZ polymerization. The sequence is that of Probable septum site-determining protein MinC from Yersinia enterocolitica serotype O:8 / biotype 1B (strain NCTC 13174 / 8081).